Consider the following 846-residue polypeptide: uncharacterized protein (846 aa).

WD repeat units lie at residues threonine 88 to aspartate 129, glutamate 132 to threonine 172, glycine 175 to leucine 215, alanine 219 to leucine 258, asparagine 262 to arginine 309, and cysteine 313 to asparagine 348. Residues proline 541–asparagine 560 are disordered. The span at alanine 544–isoleucine 555 shows a compositional bias: low complexity. One copy of the WD 7 repeat lies at phenylalanine 624 to threonine 663.

This is an uncharacterized protein from Schizosaccharomyces pombe (strain 972 / ATCC 24843) (Fission yeast).